The sequence spans 125 residues: Small ribosomal subunit protein uS12m (125 aa).

A disordered region spans residues 1–26 (MPTINQLLRKKSSRQAPKLKSKKPAL). Positions 8-23 (LRKKSSRQAPKLKSKK) are enriched in basic residues.

This sequence belongs to the universal ribosomal protein uS12 family.

The protein resides in the mitochondrion. The sequence is that of Small ribosomal subunit protein uS12m (RPS12) from Prototheca wickerhamii.